The sequence spans 190 residues: Xanthine phosphoribosyltransferase (190 aa).

Xanthine is bound by residues leucine 20 and asparagine 27. 128-132 (ANGKA) contacts 5-phospho-alpha-D-ribose 1-diphosphate. Lysine 156 is a xanthine binding site.

This sequence belongs to the purine/pyrimidine phosphoribosyltransferase family. Xpt subfamily. As to quaternary structure, homodimer.

It localises to the cytoplasm. The catalysed reaction is XMP + diphosphate = xanthine + 5-phospho-alpha-D-ribose 1-diphosphate. The protein operates within purine metabolism; XMP biosynthesis via salvage pathway; XMP from xanthine: step 1/1. Its function is as follows. Converts the preformed base xanthine, a product of nucleic acid breakdown, to xanthosine 5'-monophosphate (XMP), so it can be reused for RNA or DNA synthesis. The sequence is that of Xanthine phosphoribosyltransferase from Pseudomonas fluorescens (strain SBW25).